Consider the following 254-residue polypeptide: Glutathione S-transferase U12 (254 aa).

The short motif at 19–23 (KKRKK) is the Nuclear localization signal element. Positions 33 to 114 (TTVKLIGTWA…YVDESWPSDL (82 aa)) constitute a GST N-terminal domain. Glutathione-binding positions include 43–44 (SP), 71–72 (GK), 85–86 (KV), and 98–99 (ES). The region spanning 120–252 (LPSERAFARF…EFIEFAKKKF (133 aa)) is the GST C-terminal domain.

It belongs to the GST superfamily. Tau family.

It is found in the nucleus. It carries out the reaction RX + glutathione = an S-substituted glutathione + a halide anion + H(+). Functionally, may be involved in the conjugation of reduced glutathione to a wide number of exogenous and endogenous hydrophobic electrophiles and have a detoxification role against certain herbicides. The protein is Glutathione S-transferase U12 (GSTU12) of Arabidopsis thaliana (Mouse-ear cress).